Here is a 72-residue protein sequence, read N- to C-terminus: Large ribosomal subunit protein uL29 (72 aa).

Belongs to the universal ribosomal protein uL29 family.

This chain is Large ribosomal subunit protein uL29, found in Prochlorococcus marinus (strain MIT 9312).